A 354-amino-acid polypeptide reads, in one-letter code: Tyrosine recombinase XerH (354 aa).

Residues 48-134 (LTKGVKNIDE…AVINFFDFLD (87 aa)) enclose the Core-binding (CB) domain. Residues 163–346 (KLPEFMSKEE…DNDKLKLAAQ (184 aa)) enclose the Tyr recombinase domain. Residues Arg-205, Lys-231, His-298, Arg-301, and His-324 contribute to the active site. Tyr-333 acts as the O-(3'-phospho-DNA)-tyrosine intermediate in catalysis.

This sequence belongs to the 'phage' integrase family. XerH subfamily.

The protein resides in the cytoplasm. Its activity is regulated as follows. FtsK is required for efficient recombination. Its function is as follows. Site-specific tyrosine recombinase, which acts by catalyzing the cutting and rejoining of the recombining DNA molecules. Binds to the complete atypical dif motif (difH) site and to both halves separately. This chain is Tyrosine recombinase XerH, found in Campylobacter jejuni subsp. jejuni serotype O:2 (strain ATCC 700819 / NCTC 11168).